The following is a 124-amino-acid chain: CBS domain-containing protein MJ0729 (124 aa).

2 consecutive CBS domains span residues 10-67 (MNKD…IEDL) and 70-124 (LIDE…YKNR).

In terms of assembly, exhibits a pH-dependent oligomerization state: at pH 7, the dominant species is a dimer, where each monomer is a two-CBS domain protein, and at pH 4.5-4.8, the dominant species is a tetramer, with an oblong shape. At pH 2.5, there is formation of intermolecular hydrogen bonds, suggesting the presence of high-molecular weight species. The physiological dimeric species is thermal and chemically very stable.

The sequence is that of CBS domain-containing protein MJ0729 from Methanocaldococcus jannaschii (strain ATCC 43067 / DSM 2661 / JAL-1 / JCM 10045 / NBRC 100440) (Methanococcus jannaschii).